A 264-amino-acid chain; its full sequence is Cell division protein FtsQ (264 aa).

Residues 1-24 (MAGPTTAERGDRQQESSGPPPARW) are disordered. Residues 1-31 (MAGPTTAERGDRQQESSGPPPARWSGTRRLR) are Cytoplasmic-facing. A helical transmembrane segment spans residues 32 to 52 (ALVVLAALLVLLAGGCAWLLY). Residues 53–264 (GSSWLRLERV…VPTAPASSGS (212 aa)) lie on the Extracellular side of the membrane. Residues 57 to 126 (LRLERVSVSG…HGIGLKVTER (70 aa)) form the POTRA domain.

The protein belongs to the FtsQ/DivIB family. FtsQ subfamily.

It localises to the cell membrane. Its function is as follows. Essential cell division protein. This is Cell division protein FtsQ from Streptomyces collinus.